Here is a 98-residue protein sequence, read N- to C-terminus: Small ribosomal subunit protein bS18c (98 aa).

Basic and acidic residues predominate over residues 1 to 13; it reads MSKQSFDFKRYKP. Positions 1-26 are disordered; sequence MSKQSFDFKRYKPEAPSGSRKRPLKK.

The protein belongs to the bacterial ribosomal protein bS18 family. Part of the 30S ribosomal subunit.

It is found in the plastid. The protein localises to the chloroplast. The sequence is that of Small ribosomal subunit protein bS18c from Gnetum parvifolium (Small-leaved jointfir).